The following is a 525-amino-acid chain: GMP synthase [glutamine-hydrolyzing] (525 aa).

A Glutamine amidotransferase type-1 domain is found at 16-205; sequence PVLVVDFGAQ…LHDFAGLGAQ (190 aa). C93 serves as the catalytic Nucleophile. Residues H179 and E181 contribute to the active site. The region spanning 206-399 is the GMPS ATP-PPase domain; that stretch reads WTPANIANAL…LGLPEEIVAR (194 aa). Position 233-239 (233-239) interacts with ATP; sequence SGGVDSA.

Homodimer.

The catalysed reaction is XMP + L-glutamine + ATP + H2O = GMP + L-glutamate + AMP + diphosphate + 2 H(+). The protein operates within purine metabolism; GMP biosynthesis; GMP from XMP (L-Gln route): step 1/1. In terms of biological role, catalyzes the synthesis of GMP from XMP. In Mycobacterium bovis (strain BCG / Pasteur 1173P2), this protein is GMP synthase [glutamine-hydrolyzing].